The following is a 475-amino-acid chain: Aspartyl/glutamyl-tRNA(Asn/Gln) amidotransferase subunit B (475 aa).

This sequence belongs to the GatB/GatE family. GatB subfamily. As to quaternary structure, heterotrimer of A, B and C subunits.

The enzyme catalyses L-glutamyl-tRNA(Gln) + L-glutamine + ATP + H2O = L-glutaminyl-tRNA(Gln) + L-glutamate + ADP + phosphate + H(+). The catalysed reaction is L-aspartyl-tRNA(Asn) + L-glutamine + ATP + H2O = L-asparaginyl-tRNA(Asn) + L-glutamate + ADP + phosphate + 2 H(+). In terms of biological role, allows the formation of correctly charged Asn-tRNA(Asn) or Gln-tRNA(Gln) through the transamidation of misacylated Asp-tRNA(Asn) or Glu-tRNA(Gln) in organisms which lack either or both of asparaginyl-tRNA or glutaminyl-tRNA synthetases. The reaction takes place in the presence of glutamine and ATP through an activated phospho-Asp-tRNA(Asn) or phospho-Glu-tRNA(Gln). This is Aspartyl/glutamyl-tRNA(Asn/Gln) amidotransferase subunit B from Chlorobium limicola (strain DSM 245 / NBRC 103803 / 6330).